A 936-amino-acid chain; its full sequence is Aconitate hydratase A (936 aa).

Positions 401 to 449 (VTPDFDAEGPATENTSAQTAGTPASAADAKGNIPSAAAGAEGRPSNPVT) are disordered. Positions 412 to 422 (TENTSAQTAGT) are enriched in polar residues. Residues cysteine 472, cysteine 538, and cysteine 541 each coordinate [4Fe-4S] cluster.

It belongs to the aconitase/IPM isomerase family. Monomer. [4Fe-4S] cluster serves as cofactor.

It catalyses the reaction citrate = D-threo-isocitrate. The enzyme catalyses (2S,3R)-3-hydroxybutane-1,2,3-tricarboxylate = 2-methyl-cis-aconitate + H2O. Its pathway is carbohydrate metabolism; tricarboxylic acid cycle; isocitrate from oxaloacetate: step 2/2. The protein operates within organic acid metabolism; propanoate degradation. In terms of biological role, involved in the catabolism of short chain fatty acids (SCFA) via the tricarboxylic acid (TCA)(acetyl degradation route) and probably via the 2-methylcitrate cycle I (propionate degradation route). Catalyzes the reversible isomerization of citrate to isocitrate via cis-aconitate. Could catalyze the hydration of 2-methyl-cis-aconitate to yield (2R,3S)-2-methylisocitrate. The apo form of AcnA functions as a RNA-binding regulatory protein. The sequence is that of Aconitate hydratase A (acn) from Corynebacterium jeikeium (strain K411).